The chain runs to 215 residues: 3-isopropylmalate dehydratase small subunit (215 aa).

It belongs to the LeuD family. LeuD type 1 subfamily. As to quaternary structure, heterodimer of LeuC and LeuD.

It catalyses the reaction (2R,3S)-3-isopropylmalate = (2S)-2-isopropylmalate. The protein operates within amino-acid biosynthesis; L-leucine biosynthesis; L-leucine from 3-methyl-2-oxobutanoate: step 2/4. Its function is as follows. Catalyzes the isomerization between 2-isopropylmalate and 3-isopropylmalate, via the formation of 2-isopropylmaleate. The chain is 3-isopropylmalate dehydratase small subunit from Xanthomonas oryzae pv. oryzae (strain MAFF 311018).